The sequence spans 1726 residues: Merozoite surface protein 1 (1726 aa).

A signal peptide spans 1 to 19 (MKIIFFLCSFLFFIINTQC). A compositionally biased stretch (low complexity) spans 61–124 (KGASAQSGTS…SGTSGTSPSS (64 aa)). Residues 61–149 (KGASAQSGTS…PPADASDSDA (89 aa)) are disordered. Positions 125–134 (RSNTLPRSNT) are enriched in polar residues. Asn133 carries an N-linked (GlcNAc...) asparagine glycan. Low complexity predominate over residues 135–144 (SSGASPPADA). Asn272, Asn501, Asn567, and Asn638 each carry an N-linked (GlcNAc...) asparagine glycan. Residues 735-771 (SETTEDGGHSTHTLSQSGETEVTEETEETEETVGHTT) form a disordered region. Positions 755-765 (EVTEETEETEE) are enriched in acidic residues. 7 N-linked (GlcNAc...) asparagine glycosylation sites follow: Asn827, Asn924, Asn944, Asn990, Asn1016, Asn1114, and Asn1221. Positions 914 to 952 (TGTSSTSSPGNTTVNTAQSATHSNSQNQQSNASSTNTQN) are enriched in low complexity. The interval 914-961 (TGTSSTSSPGNTTVNTAQSATHSNSQNQQSNASSTNTQNGVAVSSGPA) is disordered. 2 disordered regions span residues 1254–1284 (VTPP…TQIP) and 1476–1497 (KEKF…DEQK). The segment covering 1270-1284 (VSGSSGSTKEETQIP) has biased composition (polar residues). The span at 1481–1490 (SSPPTTPPSP) shows a compositional bias: pro residues. N-linked (GlcNAc...) asparagine glycosylation occurs at Asn1613. 2 EGF-like domains span residues 1617–1657 (HQCV…VENP) and 1658–1705 (NPTC…IFCS). Cystine bridges form between Cys1619–Cys1630, Cys1624–Cys1640, Cys1642–Cys1653, Cys1661–Cys1674, Cys1668–Cys1688, and Cys1690–Cys1704. Residue Ser1705 is the site of GPI-anchor amidated serine attachment. A propeptide spans 1706 to 1726 (SSNFLGISFLLILMLILYSFI) (removed in mature form).

Forms a complex composed of subunits p83, p30, p38, and p42 which remain non-covalently associated; the complex is formed at the merozoite surface prior to egress from host erythrocytes. Forms a complex composed of processed MSP1 subunits, MSP6 subunit p36 and MSP7; the complex is formed at the merozoite surface prior to egress from host erythrocytes. Within the complex, interacts (via subunit p38) with MSP6 subunit p36 and (via subunits p83, p30 and p38) with MSP7 (via subunit p22). Forms a complex composed of MSP1, MSP6, DBLMSP1 and DBLMSP2. Within the complex, interacts (via subunit p38) with DBLMSP1 and DBLMSP2. Forms a complex composed of MSP1, and rhoptry proteins RhopH3, RAP1 and CLAG9/RhopH3. Within the complex, interacts (via subunits p42 and p19) with RhopH3 (via C-terminus). Forms a complex composed of MSP1, MSP6, MSP7, MSP9 and MSP3; within the complex, MSP6 and MSP9 mediate the binding to the host erythrocyte. Interacts (via subunits p19 and p42) with MSP9; the interaction is direct; MSP1 subunits p19 or p42, and MSP9 form a co-ligand complex that interacts with host SLC4A1/Band 3 protein. May interact with PFD6. Interacts with host spectrin. In terms of assembly, interacts with host glycophorin GYPA in a sialic acid-independent manner. As to quaternary structure, interacts with host proinflammatory cytokine S100P; the interaction blocks S100P inflammatory and chemotactic activities. Interacts with host SLC4A1/Band 3 (via 5ABC region) on the host erythrocyte surface in a sialic acid-independent manner. Post-translationally, the p190 precursor is cleaved by SUB1 prior to merozoite egress into 4 subunits p83, p30, p38, and p42 which remain non-covalently associated. SUB1-mediated proteolytic cleavage occurs in an orderly manner; the first cleavage occurs at the p30/p38 site, followed by cleavage at the p83/p30 site, the last cleavage occurs at the p38/p42 site. The order of cleavage is essential for parasite viability. SUB1-mediated processing is essential for merozoite egress. In a second processing step during erythrocyte invasion, p42 is cleaved by SUB2 into p33 and p19; the latter remains attached to the merozoite surface via its GPI-anchor and is endocytosed during the subsequent ring stage.

It localises to the cell membrane. The protein resides in the secreted. The protein localises to the vacuole membrane. Functionally, during the asexual blood stage, involved in merozoite egress from host erythrocytes possibly via its interaction with the host cytoskeleton protein spectrin resulting in the destabilization of the host cytoskeleton and thus leading to erythrocyte cell membrane rupture. Involved in the binding to host erythrocytes and is required for host erythrocyte invasion. In terms of biological role, by binding to host proinflammatory cytokine S100P may interfere with host immune responses. Its function is as follows. Involved in merozoite invasion of host erythrocytes. May play a role in the biogenesis and/or function of the food vacuole during the intraerythrocytic development. The chain is Merozoite surface protein 1 from Plasmodium falciparum (isolate Palo Alto / Uganda).